A 289-amino-acid chain; its full sequence is Bis(5'-nucleosyl)-tetraphosphatase, symmetrical (289 aa).

It belongs to the Ap4A hydrolase family.

The enzyme catalyses P(1),P(4)-bis(5'-adenosyl) tetraphosphate + H2O = 2 ADP + 2 H(+). Hydrolyzes diadenosine 5',5'''-P1,P4-tetraphosphate to yield ADP. The sequence is that of Bis(5'-nucleosyl)-tetraphosphatase, symmetrical from Yersinia pestis bv. Antiqua (strain Antiqua).